Here is a 258-residue protein sequence, read N- to C-terminus: 5'-nucleotidase SurE (258 aa).

Asp14, Asp15, Ser45, and Asn101 together coordinate a divalent metal cation.

The protein belongs to the SurE nucleotidase family. It depends on a divalent metal cation as a cofactor.

It is found in the cytoplasm. It carries out the reaction a ribonucleoside 5'-phosphate + H2O = a ribonucleoside + phosphate. Nucleotidase that shows phosphatase activity on nucleoside 5'-monophosphates. This is 5'-nucleotidase SurE from Chlorobium limicola (strain DSM 245 / NBRC 103803 / 6330).